We begin with the raw amino-acid sequence, 379 residues long: 23S rRNA (uracil(747)-C(5))-methyltransferase RlmC (379 aa).

The [4Fe-4S] cluster site is built by Cys-3, Cys-11, Cys-14, and Cys-87. Gln-212, Phe-241, Glu-262, and Asn-309 together coordinate S-adenosyl-L-methionine. Cys-336 acts as the Nucleophile in catalysis.

This sequence belongs to the class I-like SAM-binding methyltransferase superfamily. RNA M5U methyltransferase family. RlmC subfamily.

The catalysed reaction is uridine(747) in 23S rRNA + S-adenosyl-L-methionine = 5-methyluridine(747) in 23S rRNA + S-adenosyl-L-homocysteine + H(+). In terms of biological role, catalyzes the formation of 5-methyl-uridine at position 747 (m5U747) in 23S rRNA. In Shewanella loihica (strain ATCC BAA-1088 / PV-4), this protein is 23S rRNA (uracil(747)-C(5))-methyltransferase RlmC.